Consider the following 939-residue polypeptide: Valine--tRNA ligase (939 aa).

The short motif at 47–57 (PNVTGILHMGH) is the 'HIGH' region element. The 'KMSKS' region motif lies at 563 to 567 (KLSKS). Lysine 566 provides a ligand contact to ATP. Positions 874-939 (EHLAKERVRL…QSILDKLASL (66 aa)) form a coiled coil.

Belongs to the class-I aminoacyl-tRNA synthetase family. ValS type 1 subfamily. In terms of assembly, monomer.

It is found in the cytoplasm. It carries out the reaction tRNA(Val) + L-valine + ATP = L-valyl-tRNA(Val) + AMP + diphosphate. Catalyzes the attachment of valine to tRNA(Val). As ValRS can inadvertently accommodate and process structurally similar amino acids such as threonine, to avoid such errors, it has a 'posttransfer' editing activity that hydrolyzes mischarged Thr-tRNA(Val) in a tRNA-dependent manner. This Chlamydia trachomatis serovar L2b (strain UCH-1/proctitis) protein is Valine--tRNA ligase.